We begin with the raw amino-acid sequence, 121 residues long: Ribonuclease P protein component (121 aa).

It belongs to the RnpA family. Consists of a catalytic RNA component (M1 or rnpB) and a protein subunit.

It catalyses the reaction Endonucleolytic cleavage of RNA, removing 5'-extranucleotides from tRNA precursor.. RNaseP catalyzes the removal of the 5'-leader sequence from pre-tRNA to produce the mature 5'-terminus. It can also cleave other RNA substrates such as 4.5S RNA. The protein component plays an auxiliary but essential role in vivo by binding to the 5'-leader sequence and broadening the substrate specificity of the ribozyme. The chain is Ribonuclease P protein component from Bifidobacterium adolescentis (strain ATCC 15703 / DSM 20083 / NCTC 11814 / E194a).